The sequence spans 462 residues: Cysteine--tRNA ligase (462 aa).

Cys-27 is a Zn(2+) binding site. The 'HIGH' region signature appears at 29 to 39; it reads PTVYNYIHVGN. Zn(2+)-binding residues include Cys-209, His-234, and Glu-238. Positions 266–270 match the 'KMSKS' region motif; it reads KMSKS. Lys-269 contributes to the ATP binding site.

The protein belongs to the class-I aminoacyl-tRNA synthetase family. Monomer. Zn(2+) is required as a cofactor.

It is found in the cytoplasm. It catalyses the reaction tRNA(Cys) + L-cysteine + ATP = L-cysteinyl-tRNA(Cys) + AMP + diphosphate. The chain is Cysteine--tRNA ligase from Finegoldia magna (strain ATCC 29328 / DSM 20472 / WAL 2508) (Peptostreptococcus magnus).